The following is an 89-amino-acid chain: Cell division topological specificity factor (89 aa).

Belongs to the MinE family.

Its function is as follows. Prevents the cell division inhibition by proteins MinC and MinD at internal division sites while permitting inhibition at polar sites. This ensures cell division at the proper site by restricting the formation of a division septum at the midpoint of the long axis of the cell. The chain is Cell division topological specificity factor from Brucella anthropi (strain ATCC 49188 / DSM 6882 / CCUG 24695 / JCM 21032 / LMG 3331 / NBRC 15819 / NCTC 12168 / Alc 37) (Ochrobactrum anthropi).